Here is a 475-residue protein sequence, read N- to C-terminus: Aspartyl/glutamyl-tRNA(Asn/Gln) amidotransferase subunit B (475 aa).

This sequence belongs to the GatB/GatE family. GatB subfamily. As to quaternary structure, heterotrimer of A, B and C subunits.

The catalysed reaction is L-glutamyl-tRNA(Gln) + L-glutamine + ATP + H2O = L-glutaminyl-tRNA(Gln) + L-glutamate + ADP + phosphate + H(+). It carries out the reaction L-aspartyl-tRNA(Asn) + L-glutamine + ATP + H2O = L-asparaginyl-tRNA(Asn) + L-glutamate + ADP + phosphate + 2 H(+). Allows the formation of correctly charged Asn-tRNA(Asn) or Gln-tRNA(Gln) through the transamidation of misacylated Asp-tRNA(Asn) or Glu-tRNA(Gln) in organisms which lack either or both of asparaginyl-tRNA or glutaminyl-tRNA synthetases. The reaction takes place in the presence of glutamine and ATP through an activated phospho-Asp-tRNA(Asn) or phospho-Glu-tRNA(Gln). The chain is Aspartyl/glutamyl-tRNA(Asn/Gln) amidotransferase subunit B from Chlorobaculum tepidum (strain ATCC 49652 / DSM 12025 / NBRC 103806 / TLS) (Chlorobium tepidum).